Here is a 227-residue protein sequence, read N- to C-terminus: dTTP/UTP pyrophosphatase (227 aa).

The disordered stretch occupies residues M1 to I21. The active-site Proton acceptor is the D87.

This sequence belongs to the Maf family. YhdE subfamily. A divalent metal cation serves as cofactor.

It localises to the cytoplasm. The enzyme catalyses dTTP + H2O = dTMP + diphosphate + H(+). It catalyses the reaction UTP + H2O = UMP + diphosphate + H(+). Functionally, nucleoside triphosphate pyrophosphatase that hydrolyzes dTTP and UTP. May have a dual role in cell division arrest and in preventing the incorporation of modified nucleotides into cellular nucleic acids. This is dTTP/UTP pyrophosphatase from Rhodopirellula baltica (strain DSM 10527 / NCIMB 13988 / SH1).